Reading from the N-terminus, the 289-residue chain is MSLDQLPPLRDVIASHDLGAKKSFGQHFLLDLNLTAKIARLAGDMSRDQAIEVGPGPGGLTRAILAEGAASLLAVEMDSRFLGALDEINVASGGRLTVEQGDALEVDETALLTGPGDKVILSNLPYNVGTQLLIKWLQAEPIWWRRAVLMFQREVADRVVAQPGDKAYGRLAVISQSRCQAHLALKIPARAFTPPPKVESAVVVLDPLPEAQQFKDVVALERITASAFGQRRKTLRRSLAQAAGQGGTSADALLEEAGLNAGDRAEVIDITGFQSLARAWRAAYDAGRA.

The S-adenosyl-L-methionine site is built by His27, Leu29, Gly54, Glu76, Asp102, and Asn123.

Belongs to the class I-like SAM-binding methyltransferase superfamily. rRNA adenine N(6)-methyltransferase family. RsmA subfamily.

Its subcellular location is the cytoplasm. The catalysed reaction is adenosine(1518)/adenosine(1519) in 16S rRNA + 4 S-adenosyl-L-methionine = N(6)-dimethyladenosine(1518)/N(6)-dimethyladenosine(1519) in 16S rRNA + 4 S-adenosyl-L-homocysteine + 4 H(+). Functionally, specifically dimethylates two adjacent adenosines (A1518 and A1519) in the loop of a conserved hairpin near the 3'-end of 16S rRNA in the 30S particle. May play a critical role in biogenesis of 30S subunits. The protein is Ribosomal RNA small subunit methyltransferase A of Maricaulis maris (strain MCS10) (Caulobacter maris).